The primary structure comprises 372 residues: Aminomethyltransferase (372 aa).

Belongs to the GcvT family. The glycine cleavage system is composed of four proteins: P, T, L and H.

The catalysed reaction is N(6)-[(R)-S(8)-aminomethyldihydrolipoyl]-L-lysyl-[protein] + (6S)-5,6,7,8-tetrahydrofolate = N(6)-[(R)-dihydrolipoyl]-L-lysyl-[protein] + (6R)-5,10-methylene-5,6,7,8-tetrahydrofolate + NH4(+). Functionally, the glycine cleavage system catalyzes the degradation of glycine. The sequence is that of Aminomethyltransferase from Prochlorococcus marinus (strain NATL2A).